The chain runs to 181 residues: Transmembrane protein 47 (181 aa).

Ala-2 is modified (N-acetylalanine). Transmembrane regions (helical) follow at residues 21-41 (LVGL…VLSP), 83-103 (ALLL…LISI), 115-135 (VAVM…LYPI), and 152-172 (GYGL…LYCL).

Belongs to the TMEM47 family. Interacts with CTNNB1, CTNNA1, PRKCI, PARD6B, FYB1. Expressed in adult brain, fetal brain, cerebellum, heart, lung, prostate and thyroid.

Its subcellular location is the membrane. It is found in the cell junction. The protein localises to the adherens junction. Its function is as follows. Regulates cell junction organization in epithelial cells. May play a role in the transition from adherens junction to tight junction assembly. May regulate F-actin polymerization required for tight junctional localization dynamics and affect the junctional localization of PARD6B. During podocyte differentiation may negatively regulate activity of FYN and subsequently the abundance of nephrin. The polypeptide is Transmembrane protein 47 (TMEM47) (Homo sapiens (Human)).